We begin with the raw amino-acid sequence, 2080 residues long: MLLTAQIPESLTPFSISHGSLSVSWLLPYRLHCYATRLYRTFEATLAARSDNSEHPITLLSSVELAAHYMCYVAHETQANTDRACTQTHDISKLLLEDFEATFLRSNDIHTLASALPSSDSAKDELLRCYYETCFITKHNTPLNESALLKAAREGIVSLYTTFSGQGCGGRYFDELRELFRLYPSFVGTLISESGNLFRELASNPSAGRLFSKGFDIMAWLHHPQTTPDTEYLISAPVSFPIIGLVQLGHYAVSCRAMGLDPGAFQRSIRGSTGHSQGIVVAAAMSAADSWEAFDRLAISCLTVLFWIGVRSQQAAPQMSLSPAQIQDSIDHNEDVPSPMLSIIGLSRLDVQMHIDSINHYLPQSEHISISLVNGGRHIVVSGLPSTLYRFNLLLRKIKVPDHSGQPRATSKQKKAQFSARFLPITVPFHSHHLVSVGSVLEEDLKNVFIGSKDLGFPVFNTYTGRDLRAEVIGNIVPALVRMVTQYPVFWGAAVEFPGATHILEFGPGGLSGSGALTSHIKNGTGVRVIFAGLTSGSNRQVGYKQELFARDTCHVKFADDWSRKYAPSLVRTSNNSIVVNTKMSRLLGLPPIMVGGMTPTTAAWGFVAATMNAGYHIELAAGGYSDANAFENALLNIQKTTASGRGITVNLIYLSSHAVNWQIPLLRRLIIDGFRIEGITIGGGVPSIDVAKEYITTLGIKHIGFKPGPTTAIDAVIEIAQANPTFPVFLQWTGGRSGGHHSNEDFHQPILETYDRIRQCDNIILIAGSGFGGAADTYPYITGEWSLRYDFPPMPFDGCLLGSRVMVAKEARTSPAAKRVIVETEGLNDNEWRRTYEEAAGGIITVQSEMGQPIHKIATRGVLFWAKLDQMIFSLPKEKRIAELQKHRSWIIKGLNDDFQKPWFGRDSADQVVELRDMTYAEVLRRMVQLLYVKHQRRWIHSSYAVLFKAFVNRLEERFTTKTVQSYLIQDCKTIDDPYNIITVVLLQYQQAIKETILTPDVEYFLLLCKRRGQKPVPFVPALDEDFEFFFKKDSLWQSEDLEAVVDQDVGRTCILQGPVAAKYSVKVDEPIAEILGSIHQGHVTRLREERYCATLDSIPFVEYFGGESIQLDMSSLADGIEQSHNEQASIYSLPSSLSMPLPAVDVWMSLLAGKSRSWRHAIMSAGIVIQENKCVANPMRRLFAPAHGIRVQIRKPDVPSQTEVVLEEQQESGIYEVAVRAGLNEDGEIIVEMFERRNMSDLVVSLPCDSGTKPEYGYAPIREIMEDRNERIRRFYWSIWFGKSHPILEGSLSDSFECGKEKITRQHVESFIQAINNSTRTHKNFLEPATNVSISFAIPVAWKAIVKPLFLNALNGDLLQLVHLSNEFRMTPGAEPLKIGEEVSTVARINAIMNQDSGKMVEVSAAVLRGKEIVVEIISRFLYRGAFVDFKDTFQWRDEPLMQIQLATSKHIAVLRTREWFVPTQGCNIDLVGHTLTFQMRSLYKFQSKTVFRRIETHGKVTLELAPQKIVQVATVQYEVGICHSNTVIEFLDRYGSYSQNSVDFEDPVSVPNNGESLVICAPSSNEAYARTSGDLNPIHVSRTFAEYAGLPGLITHGMYCSAAIQDLVERLVADGNAGRIRQFSMSFVGMVLPNQKLEVKLEHIGMVEGMIRLHIEARAQETGHRVIVGEAKITQKMTTYVFTGQGSQEKGMGMDLYNQCPAAREVWDRGDKYFLHKYGFAITTIVRDNPKQLTVHFGGRQGEAIRQNYINMKVETVAEDGSIQYEKLFKDVDHNTQFYTFRSPTGLLSATQFTQPALSLMARASFEHLQIQGLVDGNCYYAGHSLGEFSALAAVAGIMSVESQALIAFYRGLTMQKAVNRDESGRSNYSMCAVDPSRISATYDEEAFLTIVREIAAETGWLLEVVNFNVANKQYVCAGNLHALDTLAGVTDRLRLLQINASEMEECLHEIIRQCVQETKSKSTPLELTRGIATIPLQGIDVPFHSTFLRGGVRHFREFLHENIDKRNINPAKLIGRYIPNVTARSFQISKDYFQYVYDLTGSSQLRDALKNWDIYEKSNGEESNGVEECSECRNSL.

In terms of domain architecture, Starter acyltransferase (SAT) spans glycine 170–lysine 397. Catalysis depends on serine 276, which acts as the For acetyltransferase activity. An enoyl reductase (ER) domain region spans residues serine 585–aspartate 830. Residues glycine 1155–leucine 1644 form a dehydratase (DH) domain region. Positions serine 1544 to alanine 1662 constitute a MaoC-like domain. Residues threonine 1682–serine 2046 enclose the Malonyl-CoA:ACP transacylase (MAT) domain. The interval tyrosine 1683–serine 2046 is malonyl/palmitoyl transferase (MT/PT) domain. Residue serine 1828 is the For malonyltransferase activity of the active site.

This sequence belongs to the fungal fatty acid synthetase subunit beta family.

It catalyses the reaction acetyl-CoA + n malonyl-CoA + 2n NADPH + 4n H(+) = a long-chain-acyl-CoA + n CoA + n CO2 + 2n NADP(+).. The catalysed reaction is holo-[ACP] + acetyl-CoA = acetyl-[ACP] + CoA. The enzyme catalyses holo-[ACP] + malonyl-CoA = malonyl-[ACP] + CoA. It carries out the reaction a (3R)-hydroxyacyl-[ACP] = a (2E)-enoyl-[ACP] + H2O. It catalyses the reaction a 2,3-saturated acyl-[ACP] + NAD(+) = a (2E)-enoyl-[ACP] + NADH + H(+). The catalysed reaction is (9Z)-octadecenoyl-[ACP] + H2O = (9Z)-octadecenoate + holo-[ACP] + H(+). Its pathway is mycotoxin biosynthesis; HC-toxin biosynthesis. In terms of biological role, fatty acid synthase beta subunit, part of the diffuse TOX2 gene cluster that mediates the biosynthesis of the HC-toxin, cyclic tetrapeptide of structure cyclo(D-Pro-L-Ala-D-Ala-L-Aeo), where Aeo stands for 2-amino-9,10-epoxi-8-oxodecanoic acid. HC-toxin is a determinant of specificity and virulence in the interaction between the producing fungus and its host, maize. TOXC contribute to the synthesis of the decanoic backbone of 2-amino-9,10-epoxi-8-oxodecanoic acid, an essential precursor for the production of the major forms of HC-toxin by the non-ribosomal peptide synthetase HTS1. This Cochliobolus carbonum (Maize leaf spot fungus) protein is Fatty acid synthase beta subunit TOXC.